A 76-amino-acid chain; its full sequence is VpAmp1.0 (76 aa).

The first 22 residues, 1–22, serve as a signal peptide directing secretion; that stretch reads MKLINLVPVFFVLIIVVDYCHS. Isoleucine amide is present on I41. Positions 42 to 76 are excised as a propeptide; sequence GKRSVESQRYVDLNRRDLEQDLQELQDFLDQISEH.

The protein belongs to the non-disulfide-bridged peptide (NDBP) superfamily. Short antimicrobial peptide (group 4) family. In terms of tissue distribution, expressed by the venom gland.

It localises to the secreted. The protein localises to the target cell membrane. Functionally, antimicrobial peptide with potent activity against Gram-positive bacteria S.aureus (MIC=2.5 uM) and S.agalactiaea (MIC=2.5 uM), and Gram-negative bacteria E.coli (MIC=24 uM) and P.aeruginosa (MIC=2.5 uM), as well as against yeasts Candida albicans (MIC=6.25 uM) and C.glabrata (MIC&gt;50 uM). Also elicits high hemolysis on human erythrocytes (HC(50)=9.2 uM). This Mesomexovis punctatus (Scorpion) protein is VpAmp1.0.